Here is a 176-residue protein sequence, read N- to C-terminus: ATP-dependent protease subunit HslV (176 aa).

The active site involves Thr2. Na(+) contacts are provided by Gly157, Cys160, and Thr163.

It belongs to the peptidase T1B family. HslV subfamily. In terms of assembly, a double ring-shaped homohexamer of HslV is capped on each side by a ring-shaped HslU homohexamer. The assembly of the HslU/HslV complex is dependent on binding of ATP.

Its subcellular location is the cytoplasm. It catalyses the reaction ATP-dependent cleavage of peptide bonds with broad specificity.. With respect to regulation, allosterically activated by HslU binding. Protease subunit of a proteasome-like degradation complex believed to be a general protein degrading machinery. The protein is ATP-dependent protease subunit HslV of Photorhabdus laumondii subsp. laumondii (strain DSM 15139 / CIP 105565 / TT01) (Photorhabdus luminescens subsp. laumondii).